Reading from the N-terminus, the 651-residue chain is Tudor domain-containing protein 3 (651 aa).

Residues 147 to 189 form a disordered region; the sequence is TKTFGGGGGGVRSHLNIGAGGHRNREVSQKEKASKSESKNEGV. The span at 169 to 189 shows a compositional bias: basic and acidic residues; that stretch reads RNREVSQKEKASKSESKNEGV. The 41-residue stretch at 193–233 folds into the UBA domain; it reads LVDEKALKHITEMGFSKEASRQALMDNANNLEAALNVLLNS. Disordered stretches follow at residues 234-272, 306-371, and 384-459; these read SKQK…APST, TEQN…DVWA, and YDRT…RKSR. Ser256 is subject to Phosphoserine. Over residues 321–338 the composition is skewed to basic and acidic residues; sequence PRNDPRQPRNEKPPRFQR. The span at 339–352 shows a compositional bias: polar residues; it reads DTPNLKSALENSVL. Ser345 carries the post-translational modification Phosphoserine. Lys470 is covalently cross-linked (Glycyl lysine isopeptide (Lys-Gly) (interchain with G-Cter in SUMO2)). A Tudor domain is found at 555–615; sequence MWKPGDECFA…KPVQTEAWEE (61 aa). Over residues 624 to 633 the composition is skewed to basic and acidic residues; it reads EFRRGGDGQP. The segment at 624-651 is disordered; it reads EFRRGGDGQPRRSTRPTQQFYQPPRARN. An EBM motif; may mediate interaction with the EJC region spans residues 631-651; that stretch reads GQPRRSTRPTQQFYQPPRARN.

As to quaternary structure, component of mRNA stress granules. Interacts with FMR1, FXR1, FXR2, EWSR1, FUS, SERBP1, EEF1A1 and DDX3X or DDX3Y, and with the small nuclear ribonucleoprotein-associated proteins SNRPB and SNRPN. Interacts with 'Lys-48'-linked tetra-ubiquitin, but not with monoubiquitin or 'Lys-63'-linked ubiquitin chains. May interact with the exon junction complex (EJC) composed at least of CASC3, EIF4A3, MAGOH and RBM8A. Interacts with POLR2A (via the C-terminal domain (CTD)).

It localises to the cytoplasm. The protein resides in the nucleus. Functionally, scaffolding protein that specifically recognizes and binds dimethylarginine-containing proteins. Plays a role in the regulation of translation of target mRNAs by binding Arg/Gly-rich motifs (GAR) in dimethylarginine-containing proteins. In nucleus, acts as a coactivator: recognizes and binds asymmetric dimethylation on the core histone tails associated with transcriptional activation (H3R17me2a and H4R3me2a) and recruits proteins at these arginine-methylated loci. In cytoplasm, acts as an antiviral factor that participates in the assembly of stress granules together with G3BP1. In Rattus norvegicus (Rat), this protein is Tudor domain-containing protein 3 (Tdrd3).